A 280-amino-acid polypeptide reads, in one-letter code: 2,3,4,5-tetrahydropyridine-2,6-dicarboxylate N-succinyltransferase (280 aa).

This sequence belongs to the transferase hexapeptide repeat family.

It is found in the cytoplasm. The catalysed reaction is (S)-2,3,4,5-tetrahydrodipicolinate + succinyl-CoA + H2O = (S)-2-succinylamino-6-oxoheptanedioate + CoA. It participates in amino-acid biosynthesis; L-lysine biosynthesis via DAP pathway; LL-2,6-diaminopimelate from (S)-tetrahydrodipicolinate (succinylase route): step 1/3. In Methylorubrum populi (strain ATCC BAA-705 / NCIMB 13946 / BJ001) (Methylobacterium populi), this protein is 2,3,4,5-tetrahydropyridine-2,6-dicarboxylate N-succinyltransferase.